A 301-amino-acid polypeptide reads, in one-letter code: Light-independent protochlorophyllide reductase iron-sulfur ATP-binding protein (301 aa).

The tract at residues 1 to 26 (MSNGSVPVSGIGGRGDGEGSSQVHME) is disordered. ATP-binding positions include 44-49 (GIGKST) and Lys73. Ser48 provides a ligand contact to Mg(2+). 2 residues coordinate [4Fe-4S] cluster: Cys129 and Cys163. 214 to 215 (NR) is a binding site for ATP.

Belongs to the NifH/BchL/ChlL family. Homodimer. Protochlorophyllide reductase is composed of three subunits; BchL, BchN and BchB. The cofactor is [4Fe-4S] cluster.

It carries out the reaction chlorophyllide a + oxidized 2[4Fe-4S]-[ferredoxin] + 2 ADP + 2 phosphate = protochlorophyllide a + reduced 2[4Fe-4S]-[ferredoxin] + 2 ATP + 2 H2O. Its pathway is porphyrin-containing compound metabolism; bacteriochlorophyll biosynthesis (light-independent). In terms of biological role, component of the dark-operative protochlorophyllide reductase (DPOR) that uses Mg-ATP and reduced ferredoxin to reduce ring D of protochlorophyllide (Pchlide) to form chlorophyllide a (Chlide). This reaction is light-independent. The L component serves as a unique electron donor to the NB-component of the complex, and binds Mg-ATP. This Halorhodospira halophila (strain DSM 244 / SL1) (Ectothiorhodospira halophila (strain DSM 244 / SL1)) protein is Light-independent protochlorophyllide reductase iron-sulfur ATP-binding protein.